Here is an 86-residue protein sequence, read N- to C-terminus: MANNKSAKKRAIQAEKRRQHNASRRSMMRTYMKKTVAAIAAGDKEAATAAFAVVTPILDRMATKGLIHKNKAARHKSRFAAQIKAL.

Residues 1-27 form a disordered region; sequence MANNKSAKKRAIQAEKRRQHNASRRSM.

Belongs to the bacterial ribosomal protein bS20 family.

Functionally, binds directly to 16S ribosomal RNA. The chain is Small ribosomal subunit protein bS20 from Vibrio vulnificus (strain CMCP6).